Here is a 37-residue protein sequence, read N- to C-terminus: Delta-amaurobitoxin-Pl1a (37 aa).

4 disulfide bridges follow: C2/C18, C9/C23, C17/C33, and C25/C31. S37 bears the Serine amide mark.

Belongs to the neurotoxin 07 (Beta/delta-agtx) family. 02 (aga-3) subfamily. Expressed by the venom gland.

It is found in the secreted. Binds at site 4 of sodium channels (Nav) and inhibits the fast inactivation of cockroach channels. This toxin is active only on insects. Has a potent activity against S.litura larvae. This Pireneitega luctuosa (Tangled nest spider) protein is Delta-amaurobitoxin-Pl1a.